Reading from the N-terminus, the 261-residue chain is Short-chain dehydrogenase/reductase ARMGADRAFT_1018421 (261 aa).

NADP(+) is bound by residues isoleucine 21, aspartate 68, asparagine 95, lysine 128, tyrosine 161, lysine 165, valine 194, and threonine 196. The active-site Proton acceptor is tyrosine 161. Lysine 165 (lowers pKa of active site Tyr) is an active-site residue.

The protein belongs to the short-chain dehydrogenases/reductases (SDR) family.

The protein operates within secondary metabolite biosynthesis. Its function is as follows. Short-chain dehydrogenase/reductase, part of the gene cluster that mediates the biosynthesis of melleolides, a range of antifungal and phytotoxic polyketide derivatives composed of an orsellinic acid (OA) moiety esterified to various sesquiterpene alcohols. The first step in melleolides biosynthesis is performed by the delta(6)-protoilludene synthase PRO1 which catalyzes the cyclization of farnesyl diphosphate to protoilludene. The orsellinic acid synthase armB produces OA by condensing acetyl-CoA with 3 malonyl-CoA units in a three-round chain elongation reaction folowed by a C2-C7 ring closure. ArmB further catalyzes the trans-esterification of OA to the various sesquiterpene alcohols resulting from the hydroxylation of protoilludene. The melleolides cluster also includes 5 cytochrome P450 monooxygenases, 4 NAD(+)-dependent oxidoreductases, one flavin-dependent oxidoreductase, and one O-methyltransferase. The cytochrome P450 monooxygenases may be involved in protoilludene hydroxylation to elaborate melleolides with multiple alcohol groups, such as melleolide D, which carries alcohol functionalities at C-4, C-5, C-10, and C-13. The role of the NAD(+)-dependent enzymes remains unknown. Numerous melleolides, including arnamial, show 5'-O-methylation of the aromatic moiety which may be catalyzed by the methyltransferase encoded in the cluster. The flavin-dependent oxidoreductase might represent the dehydrogenase yielding the aldehyde in position 1 of arnamial and other melleolides. Finally, several halogenase localized outside of the cluster, are able to catalyze the transfer of a single chlorine atom to the melleolide backbone, resulting in a 6'-chloromelleolide product. This is Short-chain dehydrogenase/reductase ARMGADRAFT_1018421 from Armillaria gallica (Bulbous honey fungus).